The chain runs to 500 residues: Protein nucleotidyltransferase YdiU (500 aa).

Residues G96, G98, R99, K119, D131, G132, R182, and R189 each coordinate ATP. The active-site Proton acceptor is the D258. Mg(2+)-binding residues include N259 and D268. Residue D268 coordinates ATP.

It belongs to the SELO family. The cofactor is Mg(2+). Mn(2+) is required as a cofactor.

The catalysed reaction is L-seryl-[protein] + ATP = 3-O-(5'-adenylyl)-L-seryl-[protein] + diphosphate. The enzyme catalyses L-threonyl-[protein] + ATP = 3-O-(5'-adenylyl)-L-threonyl-[protein] + diphosphate. It carries out the reaction L-tyrosyl-[protein] + ATP = O-(5'-adenylyl)-L-tyrosyl-[protein] + diphosphate. It catalyses the reaction L-histidyl-[protein] + UTP = N(tele)-(5'-uridylyl)-L-histidyl-[protein] + diphosphate. The catalysed reaction is L-seryl-[protein] + UTP = O-(5'-uridylyl)-L-seryl-[protein] + diphosphate. The enzyme catalyses L-tyrosyl-[protein] + UTP = O-(5'-uridylyl)-L-tyrosyl-[protein] + diphosphate. Its function is as follows. Nucleotidyltransferase involved in the post-translational modification of proteins. It can catalyze the addition of adenosine monophosphate (AMP) or uridine monophosphate (UMP) to a protein, resulting in modifications known as AMPylation and UMPylation. This Rhizobium johnstonii (strain DSM 114642 / LMG 32736 / 3841) (Rhizobium leguminosarum bv. viciae) protein is Protein nucleotidyltransferase YdiU.